Here is a 350-residue protein sequence, read N- to C-terminus: Heat-inducible transcription repressor HrcA (350 aa).

Belongs to the HrcA family.

Functionally, negative regulator of class I heat shock genes (grpE-dnaK-dnaJ and groELS operons). Prevents heat-shock induction of these operons. The protein is Heat-inducible transcription repressor HrcA of Methylococcus capsulatus (strain ATCC 33009 / NCIMB 11132 / Bath).